Reading from the N-terminus, the 274-residue chain is Large ribosomal subunit protein uL2 (274 aa).

Disordered stretches follow at residues 28–55 (APHAPLLEKKSKSGGRNNNGRITTRHVG) and 224–274 (VAMN…RRRK).

This sequence belongs to the universal ribosomal protein uL2 family. In terms of assembly, part of the 50S ribosomal subunit. Forms a bridge to the 30S subunit in the 70S ribosome.

One of the primary rRNA binding proteins. Required for association of the 30S and 50S subunits to form the 70S ribosome, for tRNA binding and peptide bond formation. It has been suggested to have peptidyltransferase activity; this is somewhat controversial. Makes several contacts with the 16S rRNA in the 70S ribosome. The sequence is that of Large ribosomal subunit protein uL2 from Pseudomonas putida (strain W619).